Consider the following 212-residue polypeptide: Prolactin (212 aa).

A signal peptide spans 1–24; that stretch reads MAQRKTNGSKLFMMVLYMVAACSA. 2 cysteine pairs are disulfide-bonded: Cys70–Cys185 and Cys202–Cys212.

It belongs to the somatotropin/prolactin family. In terms of tissue distribution, pituitary gland.

Its subcellular location is the secreted. The polypeptide is Prolactin (prl) (Dicentrarchus labrax (European seabass)).